The chain runs to 331 residues: Type II secretion system protein K (331 aa).

The propeptide at 1–9 (MPSCRRQGG) is leader sequence. Residues 8–27 (GGMALLVVLLILSVMVIIAS) form a helical membrane-spanning segment. At 28–331 (NMSGRLQLEL…MLRRLNGGAE (304 aa)) the chain is on the periplasmic side.

It belongs to the GSP K family. As to quaternary structure, type II secretion is composed of four main components: the outer membrane complex, the inner membrane complex, the cytoplasmic secretion ATPase and the periplasm-spanning pseudopilus. Interacts with core component ExeG. In terms of processing, cleaved by prepilin peptidase.

The protein resides in the cell inner membrane. Component of the type II secretion system required for the energy-dependent secretion of extracellular factors such as proteases and toxins from the periplasm. Plays a role in pseudopilus assembly and seems to control its length. Interacts with the pseudopilus tip complex that is critical for the recognition and binding of secretion substrates. This chain is Type II secretion system protein K (exeK), found in Aeromonas hydrophila.